Consider the following 263-residue polypeptide: tRNA (guanine-N(7)-)-methyltransferase (263 aa).

The interval 1–39 is disordered; sequence MVHHGQMHAQPGVGLRPDTPVASGQLPSTSIRSRRSGIS. Residues Glu-82, Asp-107, Asn-136, and Asp-159 each contribute to the S-adenosyl-L-methionine site. Asp-159 is a catalytic residue. Residues Lys-163, Asp-195, and 232–235 each bind substrate; that span reads TKYE.

Belongs to the class I-like SAM-binding methyltransferase superfamily. TrmB family.

The catalysed reaction is guanosine(46) in tRNA + S-adenosyl-L-methionine = N(7)-methylguanosine(46) in tRNA + S-adenosyl-L-homocysteine. Its pathway is tRNA modification; N(7)-methylguanine-tRNA biosynthesis. Functionally, catalyzes the formation of N(7)-methylguanine at position 46 (m7G46) in tRNA. In Mycobacterium bovis (strain ATCC BAA-935 / AF2122/97), this protein is tRNA (guanine-N(7)-)-methyltransferase.